Reading from the N-terminus, the 473-residue chain is Photosystem II CP43 reaction center protein (473 aa).

The propeptide occupies 1 to 14 (MKTLYSLRRFYPVE). Residue Thr-15 is modified to N-acetylthreonine. Thr-15 bears the Phosphothreonine mark. The next 5 membrane-spanning stretches (helical) occupy residues 69–93 (LFEVAHFVPEKPMYEQGLILLPHLA), 134–155 (LLGPETLEESFPFFGYVWKDRN), 178–200 (KALYFGGVYDTWAPGGGDVRKIT), 255–275 (KPFAWARRALVWSGEAYLSYS), and 291–312 (WFNNTAYPSEFYGPTGPEASQA). A [CaMn4O5] cluster-binding site is contributed by Glu-367. A helical transmembrane segment spans residues 447-471 (RARAAAAGFEKGIDRDFEPVLSMTP).

The protein belongs to the PsbB/PsbC family. PsbC subfamily. PSII is composed of 1 copy each of membrane proteins PsbA, PsbB, PsbC, PsbD, PsbE, PsbF, PsbH, PsbI, PsbJ, PsbK, PsbL, PsbM, PsbT, PsbX, PsbY, PsbZ, Psb30/Ycf12, at least 3 peripheral proteins of the oxygen-evolving complex and a large number of cofactors. It forms dimeric complexes. The cofactor is Binds multiple chlorophylls and provides some of the ligands for the Ca-4Mn-5O cluster of the oxygen-evolving complex. It may also provide a ligand for a Cl- that is required for oxygen evolution. PSII binds additional chlorophylls, carotenoids and specific lipids..

The protein resides in the plastid. Its subcellular location is the chloroplast thylakoid membrane. Its function is as follows. One of the components of the core complex of photosystem II (PSII). It binds chlorophyll and helps catalyze the primary light-induced photochemical processes of PSII. PSII is a light-driven water:plastoquinone oxidoreductase, using light energy to abstract electrons from H(2)O, generating O(2) and a proton gradient subsequently used for ATP formation. In Gossypium hirsutum (Upland cotton), this protein is Photosystem II CP43 reaction center protein.